The following is a 345-amino-acid chain: MRPTARQFTLPDLFSICPLQDATNPWYKQAAAESRAWINSYNIFTDRKRAFFIQGSNELLCSHVYAYAGYEQFRTCCDFVNLLFVVDEISDDQNGQDARATGRIFVNAMRDAHWDDGSILAKITHEFRERFVRLAGPKTVRRFADLCESYTDCVAREAELRERNQVLGLNDFIALRRQNSAVLLCYSLVEYILGIDLDDEVYEDPTFAKAYWAACDFVCWANDVYSYDMEQAKGHTGNNVVTVLMKEKDLSLQEASDYIGRECEKQMRDYLEAKSQLLQSTDLPQEAVRYIEALGYWMVGNLVWSFESQRYFGAQHERVKATHVVHLRPSSVLEASCDSDSDSDC.

Mg(2+) contacts are provided by D87, D91, N222, S226, and E230. The DDXXD motif signature appears at 87–91 (DEISD).

This sequence belongs to the terpene synthase family. It depends on Mg(2+) as a cofactor.

The catalysed reaction is (2E,6E)-farnesyl diphosphate + H2O = cubebol + diphosphate. It catalyses the reaction (2E,6E)-farnesyl diphosphate = beta-copaene + diphosphate. The enzyme catalyses (2E,6E)-farnesyl diphosphate = beta-cubebene + diphosphate. It carries out the reaction (2E,6E)-farnesyl diphosphate = (+)-sativene + diphosphate. In terms of biological role, sesquiterpene synthase that catalyzes the cyclization of farnesyl diphosphate (FPP) into multiple products, including germacrene D, beta-copaene, beta-cubebene, (+)-sativene and cubebol, a natural sesquiterpene alcohol used in the food industry for its cooling and refreshing taste. Terpenoid hydrocarbons resulting from cyclization of farnesyl diphosphate are intermediates in the biosynthesis of biologically active compounds such as antibiotics, toxins and pheromones. This is Linoleate 10R-lipoxygenase COP4 (COP4) from Coprinopsis cinerea (strain Okayama-7 / 130 / ATCC MYA-4618 / FGSC 9003) (Inky cap fungus).